A 382-amino-acid chain; its full sequence is ATP phosphoribosyltransferase regulatory subunit (382 aa).

The protein belongs to the class-II aminoacyl-tRNA synthetase family. HisZ subfamily. As to quaternary structure, heteromultimer composed of HisG and HisZ subunits.

It localises to the cytoplasm. It functions in the pathway amino-acid biosynthesis; L-histidine biosynthesis; L-histidine from 5-phospho-alpha-D-ribose 1-diphosphate: step 1/9. Its function is as follows. Required for the first step of histidine biosynthesis. May allow the feedback regulation of ATP phosphoribosyltransferase activity by histidine. The sequence is that of ATP phosphoribosyltransferase regulatory subunit from Burkholderia multivorans (strain ATCC 17616 / 249).